A 203-amino-acid chain; its full sequence is Inosine triphosphate pyrophosphatase (203 aa).

10–15 (TGNQNK) is an ITP binding site. A Mg(2+)-binding site is contributed by E40. Residues K52, 68-69 (DT), K85, 145-148 (FGWD), K168, and 173-174 (HR) each bind ITP.

This sequence belongs to the HAM1 NTPase family. Homodimer. It depends on Mg(2+) as a cofactor. The cofactor is Mn(2+).

The protein resides in the cytoplasm. It catalyses the reaction ITP + H2O = IMP + diphosphate + H(+). The catalysed reaction is dITP + H2O = dIMP + diphosphate + H(+). It carries out the reaction XTP + H2O = XMP + diphosphate + H(+). Functionally, pyrophosphatase that hydrolyzes non-canonical purine nucleotides such as inosine triphosphate (ITP), deoxyinosine triphosphate (dITP) or xanthosine 5'-triphosphate (XTP) to their respective monophosphate derivatives. The enzyme does not distinguish between the deoxy- and ribose forms. Probably excludes non-canonical purines from RNA and DNA precursor pools, thus preventing their incorporation into RNA and DNA and avoiding chromosomal lesions. In Nematostella vectensis (Starlet sea anemone), this protein is Inosine triphosphate pyrophosphatase.